Reading from the N-terminus, the 337-residue chain is o-succinylbenzoate synthase (337 aa).

The Proton donor role is filled by Lys-142. Positions 170, 199, and 222 each coordinate Mg(2+). Lys-248 acts as the Proton acceptor in catalysis.

It belongs to the mandelate racemase/muconate lactonizing enzyme family. MenC type 1 subfamily. A divalent metal cation serves as cofactor.

The enzyme catalyses (1R,6R)-6-hydroxy-2-succinyl-cyclohexa-2,4-diene-1-carboxylate = 2-succinylbenzoate + H2O. Its pathway is quinol/quinone metabolism; 1,4-dihydroxy-2-naphthoate biosynthesis; 1,4-dihydroxy-2-naphthoate from chorismate: step 4/7. The protein operates within quinol/quinone metabolism; menaquinone biosynthesis. Its function is as follows. Converts 2-succinyl-6-hydroxy-2,4-cyclohexadiene-1-carboxylate (SHCHC) to 2-succinylbenzoate (OSB). This is o-succinylbenzoate synthase from Pasteurella multocida (strain Pm70).